We begin with the raw amino-acid sequence, 103 residues long: uncharacterized protein (103 aa).

Positions 1 to 21 are cleaved as a signal peptide; it reads MTGFKVSSFFYILALSRFFNA.

This is an uncharacterized protein from Saccharomyces cerevisiae (strain ATCC 204508 / S288c) (Baker's yeast).